The primary structure comprises 396 residues: Elongation factor Tu (396 aa).

The region spanning Lys10–Val205 is the tr-type G domain. The G1 stretch occupies residues Gly19–Thr26. Gly19–Thr26 contributes to the GTP binding site. Position 26 (Thr26) interacts with Mg(2+). The interval Gly62 to Asn66 is G2. A G3 region spans residues Asp83–Gly86. Residues Asp83–His87 and Asn138–Asp141 each bind GTP. The interval Asn138–Asp141 is G4. Residues Ser175 to Leu177 are G5.

Belongs to the TRAFAC class translation factor GTPase superfamily. Classic translation factor GTPase family. EF-Tu/EF-1A subfamily. In terms of assembly, monomer.

The protein resides in the cytoplasm. The enzyme catalyses GTP + H2O = GDP + phosphate + H(+). Functionally, GTP hydrolase that promotes the GTP-dependent binding of aminoacyl-tRNA to the A-site of ribosomes during protein biosynthesis. The chain is Elongation factor Tu from Mycobacterium avium (strain 104).